The sequence spans 275 residues: MRFSANISWLFPEVPDFPGRIKAASQSGFRAVEVAWPYATDRTLFKAALNTHRMSLVLLNTPPGNIEAGELGLAAVPGRQDEFRTGLNEAVSWASDLGCDRIHIMAGRVPLGLERQFIEKEMEETFIENLQYAADILGQAGMVGLLEPINSLITEPRYFLNTPQHAASILHKVKRPNLKLQMDLYHWQIMGGNLTQNIKTYFPLIGHVQIAQIPHRNEPDSPGELNFMYLFDLLQDLGYQGYVGCEYKPQGDTVKGLGWMEKYLKNCDGDEDKTK.

Residues Glu-147 and Glu-246 each act as proton donor/acceptor in the active site.

It belongs to the hyi family.

The enzyme catalyses 3-hydroxypyruvate = 2-hydroxy-3-oxopropanoate. In terms of biological role, catalyzes the reversible isomerization between hydroxypyruvate and 2-hydroxy-3-oxopropanoate (also termed tartronate semialdehyde). This chain is Putative hydroxypyruvate isomerase (hyi), found in Xenopus laevis (African clawed frog).